The primary structure comprises 355 residues: Transcription factor TCP13 (355 aa).

The interval 1 to 57 (MNIVSWKDANDEVAGGATTRREREVKEDQEETEVRATSGKTVIKKQPTSISSSSSSW) is disordered. Positions 74-132 (GKDRHSKVCTLRGLRDRRVRLSVPTAIQLYDLQERLGVDQPSKAVDWLLDAAKEEIDEL) constitute a TCP domain. Residues 329–355 (TNSTTTANMSRHLGSERCTSRGSDHHM) form a disordered region. Positions 341-355 (LGSERCTSRGSDHHM) are enriched in basic and acidic residues.

As to quaternary structure, interacts with AHL27 and AHL29. Interacts with SPL. Interacts with KIN10; KIN11 and FLZ3. In terms of tissue distribution, expressed in cotyledons, particularly in the vascular region, in leaves, buds, flowers and immature siliques, and, to a lower extent, in roots.

The protein resides in the nucleus. It is found in the plastid. The protein localises to the chloroplast. Functionally, plays a pivotal role in the control of morphogenesis of shoot organs by negatively regulating the expression of boundary-specific genes such as CUC genes, probably through the induction of miRNA (e.g. miR164). Binds to the 3'-ACC-5' repeats in the light-responsive promoter (LRP) of psbD, and activates its transcription. Participates in ovule development. The protein is Transcription factor TCP13 (TCP13) of Arabidopsis thaliana (Mouse-ear cress).